The sequence spans 245 residues: 1-(5-phosphoribosyl)-5-[(5-phosphoribosylamino)methylideneamino] imidazole-4-carboxamide isomerase (245 aa).

The active-site Proton acceptor is Asp7. The active-site Proton donor is Asp129.

It belongs to the HisA/HisF family.

The protein resides in the cytoplasm. It catalyses the reaction 1-(5-phospho-beta-D-ribosyl)-5-[(5-phospho-beta-D-ribosylamino)methylideneamino]imidazole-4-carboxamide = 5-[(5-phospho-1-deoxy-D-ribulos-1-ylimino)methylamino]-1-(5-phospho-beta-D-ribosyl)imidazole-4-carboxamide. It participates in amino-acid biosynthesis; L-histidine biosynthesis; L-histidine from 5-phospho-alpha-D-ribose 1-diphosphate: step 4/9. The protein is 1-(5-phosphoribosyl)-5-[(5-phosphoribosylamino)methylideneamino] imidazole-4-carboxamide isomerase of Escherichia coli O9:H4 (strain HS).